We begin with the raw amino-acid sequence, 184 residues long: NADH-quinone oxidoreductase subunit B (184 aa).

[4Fe-4S] cluster contacts are provided by Cys37, Cys38, Cys103, and Cys132.

Belongs to the complex I 20 kDa subunit family. In terms of assembly, NDH-1 is composed of 14 different subunits. Subunits NuoB, C, D, E, F, and G constitute the peripheral sector of the complex. It depends on [4Fe-4S] cluster as a cofactor.

The protein resides in the cell membrane. It catalyses the reaction a quinone + NADH + 5 H(+)(in) = a quinol + NAD(+) + 4 H(+)(out). Its function is as follows. NDH-1 shuttles electrons from NADH, via FMN and iron-sulfur (Fe-S) centers, to quinones in the respiratory chain. The immediate electron acceptor for the enzyme in this species is believed to be a menaquinone. Couples the redox reaction to proton translocation (for every two electrons transferred, four hydrogen ions are translocated across the cytoplasmic membrane), and thus conserves the redox energy in a proton gradient. This is NADH-quinone oxidoreductase subunit B from Mycobacterium bovis (strain BCG / Pasteur 1173P2).